The following is a 78-amino-acid chain: Small integral membrane protein 5 (78 aa).

A helical membrane pass occupies residues 32-52; that stretch reads ILAFSVLVVFTATVVLLLLIA.

The protein resides in the membrane. This Bos taurus (Bovine) protein is Small integral membrane protein 5 (SMIM5).